The primary structure comprises 229 residues: 23 kDa piroplasm membrane protein (229 aa).

Positions 1–19 are cleaved as a signal peptide; that stretch reads MNKYFKVFFFVLLTHALKS. At 20 to 203 the chain is on the extracellular side; it reads SLIFGQATLQ…EKEETSKKKY (184 aa). A helical transmembrane segment spans residues 204–224; that stretch reads VLMVVVVVVFVVVASLVVFLV. Over 225 to 229 the chain is Cytoplasmic; the sequence is KFCLK.

It localises to the membrane. The sequence is that of 23 kDa piroplasm membrane protein from Theileria annulata.